The following is a 956-amino-acid chain: uncharacterized protein (956 aa).

The Fibronectin type-III domain occupies 40–141 (PATKVSIDKI…IYCMTKAREA (102 aa)). Disordered stretches follow at residues 152-173 (RNTITSSTAMQPRNSKSEPAPL) and 488-600 (NNGD…SYSH). Polar residues-rich tracts occupy residues 153 to 165 (NTITSSTAMQPRN) and 488 to 523 (NNGDSLAATNSNNSAEKNRSSGSIQLPLSNNMSRTG). Position 154 is a phosphothreonine (Thr-154). Ser-501 and Ser-520 each carry phosphoserine. Residues 524–543 (SIDLISNNNKSINNSNADSA) are compositionally biased toward low complexity. Polar residues predominate over residues 552 to 563 (VSYSPSNEPIQP). Residues 564–574 (SSSLLSQLTQD) are compositionally biased toward low complexity. Residues 578–599 (RSMLSNHISSNNENKQQPSSYS) show a composition bias toward polar residues. Residues Ser-802, Ser-842, and Ser-895 each carry the phosphoserine modification. The disordered stretch occupies residues 875-956 (VGPKVPAKEP…NLFNPHSHDS (82 aa)). A compositionally biased stretch (low complexity) spans 895–904 (SNSSISSAWS).

This is an uncharacterized protein from Saccharomyces cerevisiae (strain ATCC 204508 / S288c) (Baker's yeast).